The primary structure comprises 495 residues: L-arabinose isomerase (495 aa).

4 residues coordinate Mn(2+): glutamate 305, glutamate 332, histidine 349, and histidine 448.

It belongs to the arabinose isomerase family. It depends on Mn(2+) as a cofactor.

It catalyses the reaction beta-L-arabinopyranose = L-ribulose. It functions in the pathway carbohydrate degradation; L-arabinose degradation via L-ribulose; D-xylulose 5-phosphate from L-arabinose (bacterial route): step 1/3. Functionally, catalyzes the conversion of L-arabinose to L-ribulose. The polypeptide is L-arabinose isomerase (Mannheimia succiniciproducens (strain KCTC 0769BP / MBEL55E)).